The chain runs to 3242 residues: tRNA nuclease CdiA (3242 aa).

A signal peptide spans 1–32; that stretch reads MHQPPVRFTYRLLSYLISTIIAGQPLLPAVGA. Residues 36–322 form a two-partner system transport domain (TPS) region; sequence PQNGAGMDKA…AGGNLSVTGT (287 aa). The FHA-1 stretch occupies residues 351 to 1376; it reads GELTAGQNAM…IVVRTGHLLN (1026 aa). The receptor-binding domain (RBD) stretch occupies residues 1377-1668; sequence QREGFSATTT…TGQTGISDDW (292 aa). Residues 1668–1852 form a YP domain region; the sequence is WPLPSGNNGY…LSPEDITLHN (185 aa). The periplasmic FHA-1 repeat (pFR) stretch occupies residues 1853–1913; it reads GSVISGNNVQ…DLSAIGDISN (61 aa). Residues 2021–2631 are FHA-2; sequence DNSASSTTSQ…TSKYDSKQTS (611 aa). Residues 2075-2091 are compositionally biased toward basic and acidic residues; the sequence is RESKNSRNGRSESHESH. Disordered stretches follow at residues 2075–2094, 2310–2333, and 2439–2481; these read RESK…HAAV, GSSK…STIG, and TMAS…NAGN. Residues 2322–2333 are compositionally biased toward polar residues; it reads GTTQSQSASTIG. The tract at residues 2969 to 3242 is DUF638-CT domain; not toxic when added to the outside of E.coli, does not interfere with F-pilus mediated conjugation, toxic when expressed intracellularly; the sequence is GVDPSKLTED…IESALKGYGI (274 aa). A pre-toxin (PT) domain region spans residues 2972–3015; the sequence is PSKLTEDQKQTVSTLATLSAGMAGGIASGDVAGAAAGAGAGKNV. A VENN CT cleavage motif motif is present at residues 3016–3019; the sequence is VENN. The interval 3016–3097 is toxin import domain; sufficient to import the tRNA nuclease domain of colicin E5 into E.coli, may bind F-pili; it reads VENNALSLVA…KYLSSLHDKY (82 aa). The segment at 3016–3242 is CT domain; toxic when added to the outside of E.coli and when expressed intracellularly; the sequence is VENNALSLVA…IESALKGYGI (227 aa). Positions 3020-3141 are inner membrane translocation domain (IMTD), targets protein to FtsH; the sequence is ALSLVARGCA…SENDPKQQNE (122 aa). Residues 3020–3242 are C-terminal effector domain (CT); it reads ALSLVARGCA…IESALKGYGI (223 aa). Positions 3098-3242 are tRNase function, does not interfere with F-pilus mediated conjugation; the sequence is GSGAASNPNI…IESALKGYGI (145 aa). The segment at 3116-3146 is disordered; the sequence is KVELGGSGSGTGTPPPSENDPKQQNEKTVDK. Basic and acidic residues predominate over residues 3134–3146; sequence NDPKQQNEKTVDK. The stretch at 3137–3238 forms a coiled coil; the sequence is KQQNEKTVDK…AINKIESALK (102 aa). Catalysis depends on residues Asp3170, His3193, and Glu3196.

It in the N-terminal section; belongs to the CdiA toxin family. The C-terminal (CT) domain interacts with cognate CdiI but not non-cognate CdiI from D.dadantii strain 3937. CdiA-CT also interacts with CysK; this is blocked upon preincubation with O-acetyl-L-serine. CysK forms a complex with CdiA-CT/CdiI. One CdiA toxin subunit binds to each subunit of the CysK homodimer, and one CdiI immunity protein binds to each toxin subunit; the immune complex is thus a dimer of trimers. The 4 C-terminal residues of CdiA fit into the active site of CysK. It depends on a divalent metal cation as a cofactor.

It is found in the secreted. The protein resides in the target cell membrane. The protein localises to the target cell. It localises to the target cell cytoplasm. Its function is as follows. Toxic component of a toxin-immunity protein module, which functions as a cellular contact-dependent growth inhibition (CDI) system. CDI modules allow bacteria to communicate with and inhibit the growth of closely related neighboring bacteria in a contact-dependent fashion (target cell counts decrease 100- to 1000-fold). CdiA toxicity is neutralized by its cognate immunity protein CdiI, but not by CdiI from other bacteria. Uses heterotrimeric OmpC and OmpF as target cell outer membrane receptors; receptor function depends on polymorphisms in extracellular loops L4 and L5 of OmpC; interacts with itself and closely related bacteria but also with OmpC from E.cloacae ATCC 13047. Its ability to preferentially bind to 'self' receptors suggests it may also play a role in self-recognition and kin selection. A bamA mutation that decreases its expression about 5-fold is partially resistant to this strain of CdiA, probably due to decreased outer membrane receptor protein assembly. Isolated CdiA-CT is imported in an F-pilus-mediated fashion; CdiA-CT inhibits F-mediated conjugation, probably via its N-terminus (residues 3016-3097), although it is not clear if this is physiologically significant. Gains access to the cytoplasm of target cells by using integral inner membrane protein FtsH. The C-terminal domain (CT) cleaves within tRNA anticodon loops; this activity is inhibited by cognate CdiI. tRNase activity of CdiA-CT is stimulated by CysK, although the extreme C-terminus (residues 3098-3242) has tRNase activity in the absence of CysK. In vivo CDI toxicity requires CysK. CysK stabilizes CdiA-CT, allowing it to bind tRNA substrate; neither CdiA-CT nor CysK bind tRNA alone in vitro. Purified CdiA-CT (residues 3016-3242) inhibits E.coli cell growth when added to cultures alone or in complex with cognate CdiI, growth is inhibited when cognate CdiI is present within the cell but not when a CdiA-CT/CdiI complex is added extracellularly, suggesting CdiA-CT alone but not the CdiA-CT/CdiI complex is imported into the target cell. In terms of biological role, the CdiA protein is thought to be exported from the cell through the central lumen of CdiB, the other half of its two-partner system (TPS). The TPS domain probably remains associated with CdiB while the FHA-1 domain forms an extended filament with the receptor-binding domain (RBD) at its extremity; in the secretion arrested state the C-terminus of the RBD and YP domains form a hairpin-like structure as the FHA-2, PT and CT domains are periplasmic. The YP domain is probably responsible for this arrest at the point where it re-enters the host cell periplasm. Upon binding to a target cell outer membrane receptor (heterotrimeric OmpC-OmpF for this CDI) a signal is transmitted to activate secretion. The filament elongates slightly, the rest of CdiA is secreted and the FHA-2 domain becomes stably associated with the target cell's outer membrane where it facilitates entry of the toxic CT domain into the target cell periplasm. From there the toxic CT domain is cleaved and gains access to the target cell cytoplasm via an inner membrane protein (FtsH for this CDI). This Escherichia coli O6:K15:H31 (strain 536 / UPEC) protein is tRNA nuclease CdiA.